A 145-amino-acid polypeptide reads, in one-letter code: uncharacterized protein (145 aa).

Belongs to the methyltransferase superfamily.

Probable methyltransferase. This is an uncharacterized protein from Schizosaccharomyces pombe (strain 972 / ATCC 24843) (Fission yeast).